Consider the following 912-residue polypeptide: Effector protein hopAE1 (912 aa).

Positions 1–13 (MMPSQITRSSHSS) are enriched in polar residues. A disordered region spans residues 1 to 32 (MMPSQITRSSHSSLPEVAPASGDATGVSEQTP).

This sequence belongs to the HopW family.

It localises to the secreted. The sequence is that of Effector protein hopAE1 (hopAE1) from Pseudomonas savastanoi pv. phaseolicola (strain 1448A / Race 6) (Pseudomonas syringae pv. phaseolicola (strain 1448A / Race 6)).